We begin with the raw amino-acid sequence, 291 residues long: Ribosomal protein L11 methyltransferase (291 aa).

Residues Thr-136, Gly-159, Asp-181, and Asn-228 each contribute to the S-adenosyl-L-methionine site.

Belongs to the methyltransferase superfamily. PrmA family.

The protein localises to the cytoplasm. It catalyses the reaction L-lysyl-[protein] + 3 S-adenosyl-L-methionine = N(6),N(6),N(6)-trimethyl-L-lysyl-[protein] + 3 S-adenosyl-L-homocysteine + 3 H(+). Its function is as follows. Methylates ribosomal protein L11. The sequence is that of Ribosomal protein L11 methyltransferase from Rhizobium meliloti (strain 1021) (Ensifer meliloti).